Here is an 89-residue protein sequence, read N- to C-terminus: Small ribosomal subunit protein uS15 (89 aa).

The interval 1 to 22 (MPLSKEQKQEVMEKYKLHEHDT) is disordered.

It belongs to the universal ribosomal protein uS15 family. Part of the 30S ribosomal subunit. Forms a bridge to the 50S subunit in the 70S ribosome, contacting the 23S rRNA.

One of the primary rRNA binding proteins, it binds directly to 16S rRNA where it helps nucleate assembly of the platform of the 30S subunit by binding and bridging several RNA helices of the 16S rRNA. Its function is as follows. Forms an intersubunit bridge (bridge B4) with the 23S rRNA of the 50S subunit in the ribosome. The polypeptide is Small ribosomal subunit protein uS15 (Natranaerobius thermophilus (strain ATCC BAA-1301 / DSM 18059 / JW/NM-WN-LF)).